A 252-amino-acid polypeptide reads, in one-letter code: Chitooligosaccharide deacetylase (252 aa).

Residues His61 and His125 each contribute to the Mg(2+) site.

The protein belongs to the YdjC deacetylase family. ChbG subfamily. As to quaternary structure, homodimer. Mg(2+) is required as a cofactor.

Its subcellular location is the cytoplasm. The enzyme catalyses N,N'-diacetylchitobiose + H2O = N-acetyl-beta-D-glucosaminyl-(1-&gt;4)-D-glucosamine + acetate. The catalysed reaction is diacetylchitobiose-6'-phosphate + H2O = N'-monoacetylchitobiose-6'-phosphate + acetate. It participates in glycan degradation; chitin degradation. Involved in the degradation of chitin. ChbG is essential for growth on the acetylated chitooligosaccharides chitobiose and chitotriose but is dispensable for growth on cellobiose and chitosan dimer, the deacetylated form of chitobiose. Deacetylation of chitobiose-6-P and chitotriose-6-P is necessary for both the activation of the chb promoter by the regulatory protein ChbR and the hydrolysis of phosphorylated beta-glucosides by the phospho-beta-glucosidase ChbF. Catalyzes the removal of only one acetyl group from chitobiose-6-P to yield monoacetylchitobiose-6-P, the inducer of ChbR and the substrate of ChbF. The sequence is that of Chitooligosaccharide deacetylase from Klebsiella pneumoniae subsp. pneumoniae (strain ATCC 700721 / MGH 78578).